We begin with the raw amino-acid sequence, 355 residues long: Uroporphyrinogen decarboxylase (355 aa).

Residues 27 to 31, aspartate 77, tyrosine 154, threonine 209, and histidine 327 contribute to the substrate site; that span reads RQAGR.

It belongs to the uroporphyrinogen decarboxylase family. Homodimer.

It is found in the cytoplasm. The enzyme catalyses uroporphyrinogen III + 4 H(+) = coproporphyrinogen III + 4 CO2. It participates in porphyrin-containing compound metabolism; protoporphyrin-IX biosynthesis; coproporphyrinogen-III from 5-aminolevulinate: step 4/4. Functionally, catalyzes the decarboxylation of four acetate groups of uroporphyrinogen-III to yield coproporphyrinogen-III. In Pseudoalteromonas atlantica (strain T6c / ATCC BAA-1087), this protein is Uroporphyrinogen decarboxylase.